The primary structure comprises 99 residues: Osteocalcin (99 aa).

The first 23 residues, 1–23, serve as a signal peptide directing secretion; sequence MRTLSLLTLLALTAFCLSDLAGA. Residues 24–49 constitute a propeptide that is removed on maturation; it reads KPSDSESDKAFMSKQEGSKVVNRLRR. Positions 50–96 constitute a Gla domain; that stretch reads YLNNGLGAPAPYPDPLEPHREVCELNPNCDELADHIGFQDAYKRIYG. P58 carries the hydroxyproline modification. Residues E66, E70, E73, and D79 each contribute to the Ca(2+) site. 3 positions are modified to 4-carboxyglutamate: E66, E70, and E73. C72 and C78 are joined by a disulfide.

The protein belongs to the osteocalcin/matrix Gla protein family. In terms of processing, gamma-carboxyglutamate residues are formed by vitamin K dependent carboxylation by GGCX. These residues are essential for the binding of calcium. Decarboxylation promotes the hormone activity.

It localises to the secreted. Its function is as follows. The carboxylated form is one of the main organic components of the bone matrix, which constitutes 1-2% of the total bone protein: it acts as a negative regulator of bone formation and is required to limit bone formation without impairing bone resorption or mineralization. The carboxylated form binds strongly to apatite and calcium. The uncarboxylated form acts as a hormone secreted by osteoblasts, which regulates different cellular processes, such as energy metabolism, male fertility and brain development. Regulates of energy metabolism by acting as a hormone favoring pancreatic beta-cell proliferation, insulin secretion and sensitivity and energy expenditure. Uncarboxylated osteocalcin hormone also promotes testosterone production in the testes: acts as a ligand for G protein-coupled receptor GPRC6A at the surface of Leydig cells, initiating a signaling response that promotes the expression of enzymes required for testosterone synthesis in a CREB-dependent manner. Also acts as a regulator of brain development: osteocalcin hormone crosses the blood-brain barrier and acts as a ligand for GPR158 on neurons, initiating a signaling response that prevents neuronal apoptosis in the hippocampus, favors the synthesis of all monoamine neurotransmitters and inhibits that of gamma-aminobutyric acid (GABA). Osteocalcin also crosses the placenta during pregnancy and maternal osteocalcin is required for fetal brain development. The sequence is that of Osteocalcin (Bglap) from Rattus norvegicus (Rat).